Here is a 251-residue protein sequence, read N- to C-terminus: Ribonuclease PH (251 aa).

Phosphate-binding positions include arginine 90 and 128 to 130 (GTR).

The protein belongs to the RNase PH family. In terms of assembly, homohexameric ring arranged as a trimer of dimers.

It carries out the reaction tRNA(n+1) + phosphate = tRNA(n) + a ribonucleoside 5'-diphosphate. Functionally, phosphorolytic 3'-5' exoribonuclease that plays an important role in tRNA 3'-end maturation. Removes nucleotide residues following the 3'-CCA terminus of tRNAs; can also add nucleotides to the ends of RNA molecules by using nucleoside diphosphates as substrates, but this may not be physiologically important. Probably plays a role in initiation of 16S rRNA degradation (leading to ribosome degradation) during starvation. This chain is Ribonuclease PH, found in Leifsonia xyli subsp. xyli (strain CTCB07).